Here is a 569-residue protein sequence, read N- to C-terminus: Urease subunit beta (569 aa).

One can recognise a Urease domain in the interval Gly131–Phe569. His136, His138, and Lys219 together coordinate Ni(2+). Lys219 bears the N6-carboxylysine mark. Residue His221 coordinates substrate. 2 residues coordinate Ni(2+): His248 and His274. The active-site Proton donor is the His322. Asp362 contacts Ni(2+).

It belongs to the metallo-dependent hydrolases superfamily. Urease alpha subunit family. As to quaternary structure, heterohexamer of 3 UreA (alpha) and 3 UreB (beta) subunits. Ni cation is required as a cofactor. Carboxylation allows a single lysine to coordinate two nickel ions.

The protein resides in the cytoplasm. It catalyses the reaction urea + 2 H2O + H(+) = hydrogencarbonate + 2 NH4(+). It participates in nitrogen metabolism; urea degradation; CO(2) and NH(3) from urea (urease route): step 1/1. This chain is Urease subunit beta, found in Helicobacter felis (strain ATCC 49179 / CCUG 28539 / NCTC 12436 / CS1).